A 102-amino-acid chain; its full sequence is Putative pterin-4-alpha-carbinolamine dehydratase (102 aa).

This sequence belongs to the pterin-4-alpha-carbinolamine dehydratase family.

It carries out the reaction (4aS,6R)-4a-hydroxy-L-erythro-5,6,7,8-tetrahydrobiopterin = (6R)-L-erythro-6,7-dihydrobiopterin + H2O. This chain is Putative pterin-4-alpha-carbinolamine dehydratase, found in Burkholderia ambifaria (strain MC40-6).